A 259-amino-acid chain; its full sequence is MADS-box protein ZMM17 (259 aa).

Positions Met1–Ala61 constitute an MADS-box domain. The region spanning Asp85–Ala175 is the K-box domain. Positions Pro237 to Leu259 are disordered.

In terms of tissue distribution, strong expression in female inflorescences (ears), but also weak expression in male inflorescences (tassels). At early stages of the development of the female spiklet, expressed in all organ primordia but later restricted to the ovule and the developing silk. At very late stages of development, expression becomes restricted to parts of the silk.

It localises to the nucleus. Probable transcription factor. The polypeptide is MADS-box protein ZMM17 (M17) (Zea mays (Maize)).